A 709-amino-acid chain; its full sequence is ATP-binding cassette sub-family F member 3 (709 aa).

Residue alanine 2 is modified to N-acetylalanine. Serine 83 carries the post-translational modification Phosphoserine. The segment covering 129 to 143 has biased composition (basic and acidic residues); it reads RLKAKQEKRSEKDTL. Residues 129-171 form a disordered region; it reads RLKAKQEKRSEKDTLKTSNPLVLEEASASQAGSRKESRLESSG. A phosphoserine mark is found at serine 155, serine 157, and serine 161. Positions 161–171 are enriched in basic and acidic residues; sequence SRKESRLESSG. ABC transporter domains lie at 178–424 and 492–707; these read VRIE…LNQQ and LQLD…RREG. Residue 210 to 217 coordinates ATP; it reads GRNGLGKT. The residue at position 283 (serine 283) is a Phosphoserine. Residue 525 to 532 coordinates ATP; the sequence is GENGAGKS.

The protein belongs to the ABC transporter superfamily. ABCF family. EF3 subfamily.

In terms of biological role, displays an antiviral effect against flaviviruses in the presence of OAS1B. This chain is ATP-binding cassette sub-family F member 3 (ABCF3), found in Pongo abelii (Sumatran orangutan).